Here is a 156-residue protein sequence, read N- to C-terminus: CD-NTase-associated protein 8 (156 aa).

It belongs to the bacterial HORMA family. HORMA3 subfamily. In terms of assembly, interacts with Cap7 (also called HORMA2) and CdnC; forms CdnD:Cap7:Cap8 (also called CdnD:HORMA2:HORMA3) complexes with stoichiometries of 1:1:1 and 2:1:1.

Functionally, CBASS (cyclic oligonucleotide-based antiphage signaling system) provides immunity against bacteriophage. The CD-NTase protein synthesizes cyclic nucleotides in response to infection; these serve as specific second messenger signals. The signals activate a diverse range of effectors, leading to bacterial cell death and thus abortive phage infection. A type III-C(AAA) CBASS system. Its function is as follows. A member of the CBASS system in this bacteria. It does not seem to bind a closure peptide, its exact function is unknown. This is CD-NTase-associated protein 8 from Pseudomonas aeruginosa.